The following is an 81-amino-acid chain: Costars family protein ABRACL (81 aa).

The protein belongs to the costars family.

This Coturnix coturnix (Common quail) protein is Costars family protein ABRACL.